Here is a 545-residue protein sequence, read N- to C-terminus: Chaperonin GroEL (545 aa).

Residues 30 to 33, K51, 87 to 91, G415, 479 to 481, and D495 contribute to the ATP site; these read TLGP, DGTTT, and NAA.

Belongs to the chaperonin (HSP60) family. In terms of assembly, forms a cylinder of 14 subunits composed of two heptameric rings stacked back-to-back. Interacts with the co-chaperonin GroES.

The protein resides in the cytoplasm. The catalysed reaction is ATP + H2O + a folded polypeptide = ADP + phosphate + an unfolded polypeptide.. Its function is as follows. Together with its co-chaperonin GroES, plays an essential role in assisting protein folding. The GroEL-GroES system forms a nano-cage that allows encapsulation of the non-native substrate proteins and provides a physical environment optimized to promote and accelerate protein folding. The chain is Chaperonin GroEL from Salmonella agona (strain SL483).